Reading from the N-terminus, the 703-residue chain is 1,4-alpha-glucan-branching enzyme (703 aa).

(1,4-alpha-D-glucosyl)n-binding residues include W93 and K130. D355 serves as the catalytic Nucleophile. The active-site Proton donor is E415.

This sequence belongs to the glycosyl hydrolase 13 family. GlgB subfamily.

The protein resides in the cytoplasm. It carries out the reaction Transfers a segment of a (1-&gt;4)-alpha-D-glucan chain to a primary hydroxy group in a similar glucan chain.. It functions in the pathway glycan biosynthesis; glycogen biosynthesis. Glycogen-branching enzyme participates in the glycogen biosynthetic process along with glycogenin and glycogen synthase. Generates alpha-1,6-glucosidic branches from alpha-1,4-linked glucose chains, to increase solubility of the glycogen polymer. The protein is 1,4-alpha-glucan-branching enzyme (GLC3) of Eremothecium gossypii (strain ATCC 10895 / CBS 109.51 / FGSC 9923 / NRRL Y-1056) (Yeast).